The following is a 316-amino-acid chain: MAKLSKQQKKQMYIEKLSSLIQQYSKILIVHVDNVGSNQMASVRKSLRGKATILMGKNTRIRTALKKNLQAVPQIEKLLPLVKLNMGFVFCKDDLSEIRNIILDNKSSSHPARLGVIAPIDVFIPPGPTGMDPSHTSFLESLGISTKIVKGQIEIQEHVHLIKQGEKVTASSATLLRKFNMNPSYGVDVRTVYDDGVIYDAKVLDITDEDILEKFSKGVSNVAALSRATGVITEASYPHVFVEAFKNIVALIIDSDYTFPLMKILKKWVENPEAFAAVAAPASAAKADEPKKEEAKKVEEEEEEEEDGFMGFGMFD.

The interval 282 to 316 (ASAAKADEPKKEEAKKVEEEEEEEEDGFMGFGMFD) is disordered. Basic and acidic residues predominate over residues 286–299 (KADEPKKEEAKKVE).

This sequence belongs to the universal ribosomal protein uL10 family. As to quaternary structure, P0 forms a pentameric complex by interaction with dimers of P1 and P2. Post-translationally, phosphorylated.

Ribosomal protein P0 is the functional equivalent of E.coli protein L10. This chain is Large ribosomal subunit protein uL10 (RPLP0), found in Plasmodium falciparum (isolate 7G8).